Here is a 217-residue protein sequence, read N- to C-terminus: Octanoyltransferase (217 aa).

In terms of domain architecture, BPL/LPL catalytic spans 31-206 (KSVMDEAWLL…ELVSRLGYAE (176 aa)). Substrate-binding positions include 70–77 (RGGQVTYH), 137–139 (SLG), and 150–152 (GLA). Residue Cys-168 is the Acyl-thioester intermediate of the active site.

It belongs to the LipB family.

It is found in the cytoplasm. It carries out the reaction octanoyl-[ACP] + L-lysyl-[protein] = N(6)-octanoyl-L-lysyl-[protein] + holo-[ACP] + H(+). It functions in the pathway protein modification; protein lipoylation via endogenous pathway; protein N(6)-(lipoyl)lysine from octanoyl-[acyl-carrier-protein]: step 1/2. Catalyzes the transfer of endogenously produced octanoic acid from octanoyl-acyl-carrier-protein onto the lipoyl domains of lipoate-dependent enzymes. Lipoyl-ACP can also act as a substrate although octanoyl-ACP is likely to be the physiological substrate. The polypeptide is Octanoyltransferase (Pseudomonas aeruginosa (strain UCBPP-PA14)).